We begin with the raw amino-acid sequence, 193 residues long: Major structural subunit of bundle-forming pilus (193 aa).

Residues 1 to 13 (MVSKIMNKKYEKG) constitute a propeptide, leader sequence. L14 is modified (N-methylleucine). The chain crosses the membrane as a helical span at residues 14-35 (LSLIESAMVLALAATVTAGVMF). A disulfide bridge connects residues C129 and C179.

Belongs to the N-Me-Phe pilin family. As to quaternary structure, 10 to 100 laterally aligned filaments or bundle-forming pili coalesce into rope-like bundles. These form linkages between the bacteria within the enteropathogenic E.coli (EPEC) microcolonies that are attached to epithelial cells.

The protein localises to the fimbrium. The protein resides in the membrane. Its function is as follows. Major component of type IV bundle-forming pili (BFP) that plays a role in adherence to host cells and virulence. The chain is Major structural subunit of bundle-forming pilus (bfpA) from Escherichia coli O127:H6 (strain E2348/69 / EPEC).